We begin with the raw amino-acid sequence, 807 residues long: Ribosome biogenesis protein ERB1 (807 aa).

A disordered region spans residues 1 to 112; it reads MMAKNNKTTE…DTTSLTDRLS (112 aa). Acidic residues-rich tracts occupy residues 21–30 and 42–56; these read EESDVEEDED and EASE…YESA. Serine 23 is modified (phosphoserine). Residues 57 to 69 are compositionally biased toward basic and acidic residues; it reads VEEKESSSDKEAQ. Phosphoserine is present on residues serine 72 and serine 76. Residues 86 to 102 are compositionally biased toward acidic residues; sequence EEEGDEEEDYDSSEFSD. A Glycyl lysine isopeptide (Lys-Gly) (interchain with G-Cter in ubiquitin) cross-link involves residue lysine 127. Phosphoserine is present on residues serine 146 and serine 149. A required for interaction with NOP7 region spans residues 265–383; sequence RFVPSKNEAK…LRKVPGYGES (119 aa). Residues 383–419 are required for interaction with YTM1; it reads SIRERFERSLDLYLAPRVRKNKLNIDPNSLIPELPSP. Serine 418 is modified (phosphoserine). WD repeat units lie at residues 435-474, 483-523, 592-634, 637-675, 678-717, 721-760, and 776-807; these read GHKG…EVYR, NPDD…YDIE, SCKK…TQSP, KSKG…LVKK, PGAR…TPYK, YHEK…DMMK, and INSL…LWTT.

The protein belongs to the WD repeat BOP1/ERB1 family. Component of the NOP7 complex, composed of ERB1, NOP7 and YTM1. The complex is held together by ERB1, which interacts with NOP7 via its N-terminal domain and with YTM1 via a high-affinity interaction between the seven-bladed beta-propeller domains of the 2 proteins. The NOP7 complex associates with the 66S pre-ribosome.

It localises to the nucleus. The protein localises to the nucleolus. It is found in the nucleoplasm. Functionally, component of the NOP7 complex, which is required for maturation of the 25S and 5.8S ribosomal RNAs and formation of the 60S ribosome. This Saccharomyces cerevisiae (strain YJM789) (Baker's yeast) protein is Ribosome biogenesis protein ERB1.